The following is a 162-amino-acid chain: Putative pre-16S rRNA nuclease (162 aa).

It belongs to the YqgF nuclease family.

The protein resides in the cytoplasm. Its function is as follows. Could be a nuclease involved in processing of the 5'-end of pre-16S rRNA. This chain is Putative pre-16S rRNA nuclease, found in Brucella melitensis biotype 1 (strain ATCC 23456 / CCUG 17765 / NCTC 10094 / 16M).